The chain runs to 360 residues: Aspartate beta-hydroxylase domain-containing protein 1 (360 aa).

The Cytoplasmic portion of the chain corresponds to Met-1–Pro-45. Residues Leu-46–Cys-68 traverse the membrane as a helical segment. Residues Tyr-69–Pro-360 are Lumenal-facing.

It belongs to the aspartyl/asparaginyl beta-hydroxylase family.

Its subcellular location is the membrane. This Mus musculus (Mouse) protein is Aspartate beta-hydroxylase domain-containing protein 1 (Asphd1).